The chain runs to 360 residues: Nicotinate-nucleotide--dimethylbenzimidazole phosphoribosyltransferase (360 aa).

Glutamate 327 acts as the Proton acceptor in catalysis.

It belongs to the CobT family.

The enzyme catalyses 5,6-dimethylbenzimidazole + nicotinate beta-D-ribonucleotide = alpha-ribazole 5'-phosphate + nicotinate + H(+). Its pathway is nucleoside biosynthesis; alpha-ribazole biosynthesis; alpha-ribazole from 5,6-dimethylbenzimidazole: step 1/2. Its function is as follows. Catalyzes the synthesis of alpha-ribazole-5'-phosphate from nicotinate mononucleotide (NAMN) and 5,6-dimethylbenzimidazole (DMB). The protein is Nicotinate-nucleotide--dimethylbenzimidazole phosphoribosyltransferase of Shewanella baltica (strain OS223).